A 116-amino-acid polypeptide reads, in one-letter code: Biogenesis of lysosome-related organelles complex 1 subunit CNL1 (116 aa).

A coiled-coil region spans residues 63–95 (DIVDVNIQSFKDILSKCEELENYFTMLDQIEMI).

This sequence belongs to the BLOC1S4 family. Component of the biogenesis of lysosome-related organelles complex-1 (BLOC-1).

The protein resides in the cytoplasm. Component of the biogenesis of lysosome-related organelles complex-1 (BLOC-1), a complex that is involved in endosomal cargo sorting. The polypeptide is Biogenesis of lysosome-related organelles complex 1 subunit CNL1 (CLN1) (Vanderwaltozyma polyspora (strain ATCC 22028 / DSM 70294 / BCRC 21397 / CBS 2163 / NBRC 10782 / NRRL Y-8283 / UCD 57-17) (Kluyveromyces polysporus)).